The following is a 174-amino-acid chain: Nucleoside-triphosphatase THEP1 (174 aa).

ATP is bound by residues 15-22 and 102-109; these read GMPGVGKT and LAIVDEIG.

Belongs to the THEP1 NTPase family.

It catalyses the reaction a ribonucleoside 5'-triphosphate + H2O = a ribonucleoside 5'-diphosphate + phosphate + H(+). Has nucleotide phosphatase activity towards ATP, GTP, CTP, TTP and UTP. May hydrolyze nucleoside diphosphates with lower efficiency. The polypeptide is Nucleoside-triphosphatase THEP1 (Pyrobaculum islandicum (strain DSM 4184 / JCM 9189 / GEO3)).